Here is a 160-residue protein sequence, read N- to C-terminus: Transcription elongation factor GreA (160 aa).

Residues 2–84 adopt a coiled-coil conformation; sequence KNTVNDKILL…SKAKIIKADL (83 aa).

Belongs to the GreA/GreB family.

Functionally, necessary for efficient RNA polymerase transcription elongation past template-encoded arresting sites. The arresting sites in DNA have the property of trapping a certain fraction of elongating RNA polymerases that pass through, resulting in locked ternary complexes. Cleavage of the nascent transcript by cleavage factors such as GreA or GreB allows the resumption of elongation from the new 3'terminus. GreA releases sequences of 2 to 3 nucleotides. The polypeptide is Transcription elongation factor GreA (Mesomycoplasma hyopneumoniae (strain 232) (Mycoplasma hyopneumoniae)).